The chain runs to 215 residues: Nascent polypeptide-associated complex subunit alpha-2 (215 aa).

The disordered stretch occupies residues 1-51 (MPGEATETVPATEQELPQSQAETGSGTASDSGESVPGIEEQDSTQTTTQKA). Residues 9–32 (VPATEQELPQSQAETGSGTASDSG) show a composition bias toward polar residues. 2 positions are modified to phosphoserine: Ser43 and Ser132. An NAC-A/B domain is found at 70–135 (SRSEKRARKA…AKIQDLSQQA (66 aa)). Lys142 is subject to N6-acetyllysine; alternate. A Glycyl lysine isopeptide (Lys-Gly) (interchain with G-Cter in SUMO2); alternate cross-link involves residue Lys142. Residue Thr161 is modified to Phosphothreonine. Phosphoserine is present on residues Ser166, Ser186, Ser191, and Ser203. In terms of domain architecture, UBA spans 176–213 (VEVKDVKLVMSQANVSRAKAVRALKNNSNDIVNAIMEL). Thr214 carries the post-translational modification Phosphothreonine.

It belongs to the NAC-alpha family. Part of the nascent polypeptide-associated complex (NAC), consisting of NACA and BTF3. NAC associates with ribosomes through the BTF3 subunit. Both subunits can contact nascent polypeptide chains. In terms of tissue distribution, expressed specifically in testis and skeletal muscle.

The protein localises to the cytoplasm. It is found in the nucleus. Its function is as follows. Prevents inappropriate targeting of non-secretory polypeptides to the endoplasmic reticulum (ER). Binds to nascent polypeptide chains as they emerge from the ribosome and blocks their interaction with the signal recognition particle (SRP), which normally targets nascent secretory peptides to the ER. Also reduces the inherent affinity of ribosomes for protein translocation sites in the ER membrane (M sites). The polypeptide is Nascent polypeptide-associated complex subunit alpha-2 (NACA2) (Homo sapiens (Human)).